A 556-amino-acid polypeptide reads, in one-letter code: Oxygen-dependent choline dehydrogenase (556 aa).

Position 4–33 (4–33 (DYIIIGAGSAGNVLATRLTEDPNTSVLLLE)) interacts with FAD. H473 functions as the Proton acceptor in the catalytic mechanism.

It belongs to the GMC oxidoreductase family. FAD is required as a cofactor.

The enzyme catalyses choline + A = betaine aldehyde + AH2. It catalyses the reaction betaine aldehyde + NAD(+) + H2O = glycine betaine + NADH + 2 H(+). Its pathway is amine and polyamine biosynthesis; betaine biosynthesis via choline pathway; betaine aldehyde from choline (cytochrome c reductase route): step 1/1. Involved in the biosynthesis of the osmoprotectant glycine betaine. Catalyzes the oxidation of choline to betaine aldehyde and betaine aldehyde to glycine betaine at the same rate. This Escherichia coli O139:H28 (strain E24377A / ETEC) protein is Oxygen-dependent choline dehydrogenase.